We begin with the raw amino-acid sequence, 150 residues long: D-aminoacyl-tRNA deacylase (150 aa).

Residues G138–P139 carry the Gly-cisPro motif, important for rejection of L-amino acids motif.

It belongs to the DTD family. As to quaternary structure, homodimer.

It localises to the cytoplasm. The enzyme catalyses glycyl-tRNA(Ala) + H2O = tRNA(Ala) + glycine + H(+). It catalyses the reaction a D-aminoacyl-tRNA + H2O = a tRNA + a D-alpha-amino acid + H(+). Its function is as follows. An aminoacyl-tRNA editing enzyme that deacylates mischarged D-aminoacyl-tRNAs. Also deacylates mischarged glycyl-tRNA(Ala), protecting cells against glycine mischarging by AlaRS. Acts via tRNA-based rather than protein-based catalysis; rejects L-amino acids rather than detecting D-amino acids in the active site. By recycling D-aminoacyl-tRNA to D-amino acids and free tRNA molecules, this enzyme counteracts the toxicity associated with the formation of D-aminoacyl-tRNA entities in vivo and helps enforce protein L-homochirality. In Opitutus terrae (strain DSM 11246 / JCM 15787 / PB90-1), this protein is D-aminoacyl-tRNA deacylase.